The chain runs to 460 residues: MIQLKVYAGLSTLATLVVIYHAFSSRGQFYPATVYLSTSKINLVVLLNMGLVLMLSLWNLVKIVFLGSLREAEVERLNEQAWRELMEILFAITIFRQDFSVGFISLVVTLLLIKGLHWMAQKRVEYIETTPSVTLLSHVRIVSFMVFLLILDCLLTYSSIQQLIQSRKASMSVFFTFEYMILATTTVSIIVKYAFYVTDMLKEGQWEGKPVYTFYLELVRDLLHLSMYLCFFLMIFMNYGLPLHLIRELYETFRNFKIRVTDYLRYRKITSNMNDRFPDATPEELSSNDATCIICREEMTSAKKLVCGHLFHVHCLRSWLERQNTCPTCRALVVPAENATSTASGNRGPHQESLQQGTGTSSSDGQGSSVSAAASENMSRHEARFQAAASAASIYGRSIVYPSSANTLVWSQGNSLLPQTEVEAQRRFLESQIEVLTNQLRLLEKPTTVDTKGKSVADTA.

Residues 1–3 (MIQ) lie on the Cytoplasmic side of the membrane. The helical transmembrane segment at 4–24 (LKVYAGLSTLATLVVIYHAFS) threads the bilayer. The Lumenal portion of the chain corresponds to 25–40 (SRGQFYPATVYLSTSK). A helical transmembrane segment spans residues 41 to 61 (INLVVLLNMGLVLMLSLWNLV). Residues 62–98 (KIVFLGSLREAEVERLNEQAWRELMEILFAITIFRQD) are Cytoplasmic-facing. Residues 99-119 (FSVGFISLVVTLLLIKGLHWM) traverse the membrane as a helical segment. At 120-140 (AQKRVEYIETTPSVTLLSHVR) the chain is on the lumenal side. The chain crosses the membrane as a helical span at residues 141 to 161 (IVSFMVFLLILDCLLTYSSIQ). Over 162–170 (QLIQSRKAS) the chain is Cytoplasmic. The chain crosses the membrane as a helical span at residues 171-191 (MSVFFTFEYMILATTTVSIIV). Residues 192-225 (KYAFYVTDMLKEGQWEGKPVYTFYLELVRDLLHL) lie on the Lumenal side of the membrane. Residues 226–246 (SMYLCFFLMIFMNYGLPLHLI) traverse the membrane as a helical segment. At 247–460 (RELYETFRNF…TKGKSVADTA (214 aa)) the chain is on the cytoplasmic side. The segment at 292–330 (CIICREEMTSAKKLVCGHLFHVHCLRSWLERQNTCPTCR) adopts an RING-type; atypical zinc-finger fold. A disordered region spans residues 339-378 (ATSTASGNRGPHQESLQQGTGTSSSDGQGSSVSAAASENM). Over residues 353–375 (SLQQGTGTSSSDGQGSSVSAAAS) the composition is skewed to low complexity.

This sequence belongs to the HRD1 family.

The protein localises to the endoplasmic reticulum membrane. It catalyses the reaction S-ubiquitinyl-[E2 ubiquitin-conjugating enzyme]-L-cysteine + [acceptor protein]-L-lysine = [E2 ubiquitin-conjugating enzyme]-L-cysteine + N(6)-ubiquitinyl-[acceptor protein]-L-lysine.. The protein operates within protein modification; protein ubiquitination. Its function is as follows. Probable component of the HRD1 ubiquitin ligase complex that mediates the rapid degradation of misfolded endoplasmic reticulum (ER) proteins, a process called ER-associated degradation (ERAD). Targets the misfolded LRR receptor kinase BRI1. Functions redundantly with HRD3A. The sequence is that of ERAD-associated E3 ubiquitin-protein ligase HRD1B from Arabidopsis thaliana (Mouse-ear cress).